The sequence spans 608 residues: uncharacterized protein (608 aa).

The chain crosses the membrane as a helical span at residues 4 to 24; that stretch reads LIFMALLMSLLFIGTVFGYGD.

It to M.jannaschii MJ1394 and A.fulgidus AF2028.

Its subcellular location is the membrane. This is an uncharacterized protein from Methanocaldococcus jannaschii (strain ATCC 43067 / DSM 2661 / JAL-1 / JCM 10045 / NBRC 100440) (Methanococcus jannaschii).